The sequence spans 217 residues: Mitochondrial inner membrane protease ATP23 (217 aa).

A disordered region spans residues 1-21 (MATPTPRHQETPQETTERERC). Positions 7-21 (RHQETPQETTERERC) are enriched in basic and acidic residues. Position 118 (H118) interacts with a divalent metal cation. Residue E119 is part of the active site. Position 122 (H122) interacts with a divalent metal cation.

It belongs to the peptidase M76 family.

It localises to the mitochondrion inner membrane. Functionally, has a dual role in the assembly of mitochondrial ATPase. Acts as a protease that removes N-terminal residues of mitochondrial ATPase CF(0) subunit 6 at the intermembrane space side. Also involved in the correct assembly of the membrane-embedded ATPase CF(0) particle, probably mediating association of subunit 6 with the subunit 9 ring. The protein is Mitochondrial inner membrane protease ATP23 (ATP23) of Mycosarcoma maydis (Corn smut fungus).